The following is a 61-amino-acid chain: Tryptophyllin-1 (61 aa).

Positions 1-22 (MDILKKSLFLALFLGLVSISFC) are cleaved as a signal peptide. Residues 23–53 (DEEKRQDDDESNESEEKKEIHEEGSQEERRE) constitute a propeptide that is removed on maturation. A disordered region spans residues 24 to 61 (EEKRQDDDESNESEEKKEIHEEGSQEERREKPPPWVPV). Basic and acidic residues predominate over residues 36-55 (SEEKKEIHEEGSQEERREKP).

Expressed by the skin glands.

The protein localises to the secreted. Functionally, the synthetic peptide inhibits bradykinin-induced relaxation of rat tail artery smooth muscle, and also has anti-proliferative effects on the human prostate cancer cell lines LNCaP, PC3 and DU145. This chain is Tryptophyllin-1, found in Phyllomedusa sauvagei (Sauvage's leaf frog).